A 288-amino-acid polypeptide reads, in one-letter code: Pantothenate synthetase (288 aa).

ATP is bound at residue M30–H37. H37 (proton donor) is an active-site residue. Q61 contributes to the (R)-pantoate binding site. A beta-alanine-binding site is contributed by Q61. Residue G149–D152 coordinates ATP. A (R)-pantoate-binding site is contributed by Q155. Residues V178 and L186–R189 contribute to the ATP site.

The protein belongs to the pantothenate synthetase family. As to quaternary structure, homodimer.

It is found in the cytoplasm. The enzyme catalyses (R)-pantoate + beta-alanine + ATP = (R)-pantothenate + AMP + diphosphate + H(+). The protein operates within cofactor biosynthesis; (R)-pantothenate biosynthesis; (R)-pantothenate from (R)-pantoate and beta-alanine: step 1/1. Functionally, catalyzes the condensation of pantoate with beta-alanine in an ATP-dependent reaction via a pantoyl-adenylate intermediate. The protein is Pantothenate synthetase of Tolumonas auensis (strain DSM 9187 / NBRC 110442 / TA 4).